A 348-amino-acid polypeptide reads, in one-letter code: D-alanine--D-alanine ligase (348 aa).

The ATP-grasp domain occupies 136–344 (KSVFKSYNLP…LEKLVANLIE (209 aa)). Residue 171–226 (NKIISYPCFIKPANLGSSVGITKAYSKEEFIAGIEFAAKYDERIIVEKSIEGRELE) participates in ATP binding. Mg(2+) is bound by residues aspartate 297, glutamate 311, and asparagine 313.

Belongs to the D-alanine--D-alanine ligase family. Requires Mg(2+) as cofactor. Mn(2+) is required as a cofactor.

Its subcellular location is the cytoplasm. It catalyses the reaction 2 D-alanine + ATP = D-alanyl-D-alanine + ADP + phosphate + H(+). It participates in cell wall biogenesis; peptidoglycan biosynthesis. Cell wall formation. The sequence is that of D-alanine--D-alanine ligase from Prochlorococcus marinus (strain NATL2A).